The chain runs to 168 residues: tRNA-splicing endonuclease subunit Sen15 (168 aa).

A disordered region spans residues 1–32 (MEERSDSEPTPGCSGPGPAPVRDGGGAHTWAP). Serine 7 and serine 165 each carry phosphoserine.

It belongs to the SEN15 family. Homodimer. tRNA splicing endonuclease is a heterotetramer composed of TSEN2, TSEN15, TSEN34/LENG5 and TSEN54. tRNA splicing endonuclease complex also contains proteins of the pre-mRNA 3' end processing machinery such as CLP1, CPSF1, CPSF4 and CSTF2.

The protein resides in the nucleus. It is found in the nucleolus. Its function is as follows. Non-catalytic subunit of the tRNA-splicing endonuclease complex, a complex responsible for identification and cleavage of the splice sites in pre-tRNA. It cleaves pre-tRNA at the 5' and 3' splice sites to release the intron. The products are an intron and two tRNA half-molecules bearing 2',3' cyclic phosphate and 5'-OH termini. There are no conserved sequences at the splice sites, but the intron is invariably located at the same site in the gene, placing the splice sites an invariant distance from the constant structural features of the tRNA body. The tRNA splicing endonuclease is also involved in mRNA processing via its association with pre-mRNA 3'-end processing factors, establishing a link between pre-tRNA splicing and pre-mRNA 3'-end formation, suggesting that the endonuclease subunits function in multiple RNA-processing events. This Mus musculus (Mouse) protein is tRNA-splicing endonuclease subunit Sen15 (Tsen15).